We begin with the raw amino-acid sequence, 387 residues long: Succinyl-diaminopimelate desuccinylase (387 aa).

His-73 contacts Zn(2+). Asp-75 is a catalytic residue. Position 106 (Asp-106) interacts with Zn(2+). The active-site Proton acceptor is the Glu-141. 3 residues coordinate Zn(2+): Glu-142, Glu-170, and His-359.

This sequence belongs to the peptidase M20A family. DapE subfamily. In terms of assembly, homodimer. Requires Zn(2+) as cofactor. Co(2+) is required as a cofactor.

It catalyses the reaction N-succinyl-(2S,6S)-2,6-diaminopimelate + H2O = (2S,6S)-2,6-diaminopimelate + succinate. It functions in the pathway amino-acid biosynthesis; L-lysine biosynthesis via DAP pathway; LL-2,6-diaminopimelate from (S)-tetrahydrodipicolinate (succinylase route): step 3/3. Catalyzes the hydrolysis of N-succinyl-L,L-diaminopimelic acid (SDAP), forming succinate and LL-2,6-diaminopimelate (DAP), an intermediate involved in the bacterial biosynthesis of lysine and meso-diaminopimelic acid, an essential component of bacterial cell walls. The protein is Succinyl-diaminopimelate desuccinylase of Methylorubrum populi (strain ATCC BAA-705 / NCIMB 13946 / BJ001) (Methylobacterium populi).